We begin with the raw amino-acid sequence, 629 residues long: Citrate (Re)-synthase (629 aa).

In terms of domain architecture, Pyruvate carboxyltransferase spans 59–329; it reads IFITDTTFRD…TNGIDTTVIT (271 aa). The Cache domain maps to 497–601; sequence VMQRFIEEYP…GVDIRVEDLV (105 aa).

This sequence belongs to the alpha-IPM synthase/homocitrate synthase family. As to quaternary structure, homotetramer. Co(2+) serves as cofactor. The cofactor is Mn(2+).

The catalysed reaction is oxaloacetate + acetyl-CoA + H2O = citrate + CoA + H(+). Inhibited by p-hydroxymercuribenzoate and EDTA. Functionally, catalyzes the condensation of the acetyl group of acetyl-CoA with oxaloacetate to form citrate. In Syntrophus aciditrophicus (strain SB), this protein is Citrate (Re)-synthase.